The chain runs to 207 residues: Putative zinc finger protein 137 (207 aa).

The C2H2-type 1 zinc-finger motif lies at 72-94 (CKCNDCHKVFSNATTIANHWRIH). The C2H2-type 2; degenerate zinc finger occupies 100–122 (YKCNKCGKIFRHRSYLAVYQRTH). The C2H2-type 3; degenerate zinc-finger motif lies at 128–150 (YKYHDCGKVFSQASSYAKHRRIH). 2 consecutive C2H2-type zinc fingers follow at residues 156-178 (HKCD…QRIH) and 184-206 (YKCL…QKIH).

The protein belongs to the krueppel C2H2-type zinc-finger protein family.

The protein resides in the nucleus. May be involved in transcriptional regulation. The chain is Putative zinc finger protein 137 (ZNF137P) from Homo sapiens (Human).